We begin with the raw amino-acid sequence, 341 residues long: Putative casein kinase I C03C10.2 (341 aa).

One can recognise a Protein kinase domain in the interval Trp-50–Leu-326. Residues Ile-56 to Ile-64 and Lys-79 each bind ATP. Asp-173 functions as the Proton acceptor in the catalytic mechanism.

The protein belongs to the protein kinase superfamily. CK1 Ser/Thr protein kinase family. Casein kinase I subfamily.

The catalysed reaction is L-seryl-[protein] + ATP = O-phospho-L-seryl-[protein] + ADP + H(+). It catalyses the reaction L-threonyl-[protein] + ATP = O-phospho-L-threonyl-[protein] + ADP + H(+). The polypeptide is Putative casein kinase I C03C10.2 (Caenorhabditis elegans).